We begin with the raw amino-acid sequence, 744 residues long: NAD(P)H-quinone oxidoreductase subunit 5, chloroplastic (744 aa).

16 consecutive transmembrane segments (helical) span residues 9 to 29 (WIIP…LLLF), 40 to 60 (WAFQ…NLSI), 88 to 108 (LIDP…IMVL), 125 to 145 (FAYM…SNLI), 147 to 167 (IYIF…FWFT), 185 to 205 (GDFG…SFEF), 219 to 239 (NEVN…GAIA), 258 to 278 (TPIS…FLIA), 290 to 312 (IMNF…ALAQ), 327 to 347 (LGYM…FHLI), 354 to 374 (ALLF…VGYS), 396 to 416 (TAFL…CFWS), 425 to 445 (WLYS…TAFY), 548 to 568 (MLFP…LGIP), 608 to 628 (IFSV…YKPV), and 724 to 744 (YLFF…FLNF).

The protein belongs to the complex I subunit 5 family. In terms of assembly, NDH is composed of at least 16 different subunits, 5 of which are encoded in the nucleus.

Its subcellular location is the plastid. It localises to the chloroplast thylakoid membrane. The enzyme catalyses a plastoquinone + NADH + (n+1) H(+)(in) = a plastoquinol + NAD(+) + n H(+)(out). It carries out the reaction a plastoquinone + NADPH + (n+1) H(+)(in) = a plastoquinol + NADP(+) + n H(+)(out). Its function is as follows. NDH shuttles electrons from NAD(P)H:plastoquinone, via FMN and iron-sulfur (Fe-S) centers, to quinones in the photosynthetic chain and possibly in a chloroplast respiratory chain. The immediate electron acceptor for the enzyme in this species is believed to be plastoquinone. Couples the redox reaction to proton translocation, and thus conserves the redox energy in a proton gradient. The polypeptide is NAD(P)H-quinone oxidoreductase subunit 5, chloroplastic (ndhF) (Dampiera diversifolia (Blue dampiera)).